The following is a 276-amino-acid chain: Urease accessory protein UreD (276 aa).

This sequence belongs to the UreD family. As to quaternary structure, ureD, UreF and UreG form a complex that acts as a GTP-hydrolysis-dependent molecular chaperone, activating the urease apoprotein by helping to assemble the nickel containing metallocenter of UreC. The UreE protein probably delivers the nickel.

The protein localises to the cytoplasm. Functionally, required for maturation of urease via the functional incorporation of the urease nickel metallocenter. The protein is Urease accessory protein UreD of Bradyrhizobium diazoefficiens (strain JCM 10833 / BCRC 13528 / IAM 13628 / NBRC 14792 / USDA 110).